The sequence spans 428 residues: Bacteriochlorophyll synthase 44.5 kDa chain (428 aa).

12 helical membrane passes run 3–23 (LGWL…AVVV), 32–52 (LMVV…ALHY), 73–93 (FFVI…AVAV), 115–135 (GFGV…ATEP), 144–164 (ITWL…GHFL), 172–192 (LLWI…LAVW), 225–245 (AFTF…LILE), 269–289 (GVFF…IGSL), 291–311 (GWVV…VALG), 317–337 (ALVP…VAAI), 358–378 (LWGA…AGAA), and 393–413 (LVFG…TGVV).

This sequence belongs to the PucC family.

Its subcellular location is the membrane. It participates in porphyrin-containing compound metabolism; bacteriochlorophyll biosynthesis (light-independent). This Rhodobacter capsulatus (strain ATCC BAA-309 / NBRC 16581 / SB1003) protein is Bacteriochlorophyll synthase 44.5 kDa chain.